A 258-amino-acid polypeptide reads, in one-letter code: Chymotrypsin-2 (258 aa).

The N-terminal stretch at 1 to 17 (MLRKVFAVVSVLLVVSA) is a signal peptide. Residues 18–32 (AKVTKLVLDDHYVNR) constitute a propeptide, activation peptide. Positions 33-255 (VVGGEVAKNG…YHEWVRTTMA (223 aa)) constitute a Peptidase S1 domain. The cysteines at positions 59 and 75 are disulfide-linked. Residues His-74 and Asp-119 each act as charge relay system in the active site. 2 disulfide bridges follow: Cys-182–Cys-198 and Cys-208–Cys-232. Ser-212 acts as the Charge relay system in catalysis.

It belongs to the peptidase S1 family. After blood feeding, expression is induced in the midgut epithelium, followed by secretion into the midgut lumen.

It is found in the secreted. It catalyses the reaction Preferential cleavage: Tyr-|-Xaa, Trp-|-Xaa, Phe-|-Xaa, Leu-|-Xaa.. The protein is Chymotrypsin-2 (CHYM2) of Anopheles gambiae (African malaria mosquito).